Reading from the N-terminus, the 228-residue chain is Phosphoglycolate phosphatase (228 aa).

Residue aspartate 9 is the Nucleophile of the active site. Mg(2+)-binding residues include aspartate 9 and aspartate 11. Substrate is bound at residue lysine 151. Mg(2+) is bound by residues aspartate 174 and aspartate 178.

This sequence belongs to the archaeal SPP-like hydrolase family. It depends on Mg(2+) as a cofactor.

The enzyme catalyses 2-phosphoglycolate + H2O = glycolate + phosphate. Functionally, catalyzes the dephosphorylation of 2-phosphoglycolate. This Pyrobaculum islandicum (strain DSM 4184 / JCM 9189 / GEO3) protein is Phosphoglycolate phosphatase.